The sequence spans 155 residues: Ribosomal RNA large subunit methyltransferase H (155 aa).

Residues L72, G103, and 122-127 each bind S-adenosyl-L-methionine; that span reads LSDLTL.

It belongs to the RNA methyltransferase RlmH family. Homodimer.

The protein localises to the cytoplasm. It carries out the reaction pseudouridine(1915) in 23S rRNA + S-adenosyl-L-methionine = N(3)-methylpseudouridine(1915) in 23S rRNA + S-adenosyl-L-homocysteine + H(+). Its function is as follows. Specifically methylates the pseudouridine at position 1915 (m3Psi1915) in 23S rRNA. This Acidovorax sp. (strain JS42) protein is Ribosomal RNA large subunit methyltransferase H.